The following is a 401-amino-acid chain: Beta-ketoadipyl-CoA thiolase (401 aa).

The active-site Acyl-thioester intermediate is the Cys90. Active-site proton acceptor residues include His357 and Cys387.

It belongs to the thiolase-like superfamily. Thiolase family.

It carries out the reaction succinyl-CoA + acetyl-CoA = 3-oxoadipyl-CoA + CoA. It functions in the pathway aromatic compound metabolism; beta-ketoadipate pathway; acetyl-CoA and succinyl-CoA from 3-oxoadipate: step 2/2. Its function is as follows. Catalyzes thiolytic cleavage of beta-ketoadipyl-CoA to succinyl-CoA and acetyl-CoA. This Acinetobacter baylyi (strain ATCC 33305 / BD413 / ADP1) protein is Beta-ketoadipyl-CoA thiolase (catF).